A 499-amino-acid polypeptide reads, in one-letter code: Protein singed wings 2 (499 aa).

An N-terminal signal peptide occupies residues 1-29; it reads MPSGVFQKRPKAAETISLFCMILIRLSRA. 2 LRR repeats span residues 154–175 and 178–199; these read ELHTINISWTNLSYISSRTFKR and PLKVLDLRWNQLIQLDGPLLLP. The LRRCT 1 domain maps to 210-265; that stretch reads NPWNCTRNFKWLLLQPEKGRLVVDRDELICTDRKYKERQMLMVMHYKLELKRQCQS. LRR repeat units lie at residues 307 to 328, 332 to 353, and 357 to 378; these read NTTTLVINDNMISDINPLRDNP, HVVDMQLENNQISNVDNLEDTY, and NFRLLNLRGNNLRKLHVYALDN. Positions 394-449 constitute an LRRCT 2 domain; the sequence is NPWHCTCKFGSRMRELLTKYKDIVRDAWNVSCTYRLDDDQLLAKVLTLSRQEMCNL.

In terms of biological role, has a role in the ecdysone induced cascade; probably indirect control of 'late' ecdysone genes. This chain is Protein singed wings 2, found in Drosophila melanogaster (Fruit fly).